A 96-amino-acid polypeptide reads, in one-letter code: Cytochrome c oxidase assembly factor 3 homolog, mitochondrial (96 aa).

Over 1–50 the chain is Mitochondrial matrix; sequence MSSQGEPKPEAQFAKRIDPTKEALTKEQLQFIRQVEMAQWKKKTDKLRGR. A helical transmembrane segment spans residues 51–73; it reads NVATGLAIGAVVLGIYGYTFYSV. Over 74–96 the chain is Mitochondrial intermembrane; that stretch reads SQEKIMDEIDEEAKVRVPKTGAN.

It belongs to the COA3 family. As to quaternary structure, core component of the MITRAC (mitochondrial translation regulation assembly intermediate of cytochrome c oxidase complex) complex.

It is found in the mitochondrion inner membrane. Core component of the MITRAC (mitochondrial translation regulation assembly intermediate of cytochrome c oxidase complex) complex, that regulates cytochrome c oxidase assembly. MITRAC complexes regulate both translation of mitochondrial encoded components and assembly of nuclear-encoded components imported in mitochondrion. Required for efficient translation of MT-CO1 and mitochondrial respiratory chain complex IV assembly. The polypeptide is Cytochrome c oxidase assembly factor 3 homolog, mitochondrial (coa3a) (Danio rerio (Zebrafish)).